We begin with the raw amino-acid sequence, 346 residues long: D-alanine--D-alanine ligase (346 aa).

An ATP-grasp domain is found at 133 to 327; the sequence is KLYAKSVGVK…TLADQIPLEK (195 aa). 159-211 contacts ATP; the sequence is LRFPCIIKPARLGSSIGISIVKDEKDLEYAKDVGFEFDNDLVVEEFKNNIKEY. Mg(2+)-binding residues include Asp-284, Glu-296, and Asn-298.

The protein belongs to the D-alanine--D-alanine ligase family. The cofactor is Mg(2+). Mn(2+) is required as a cofactor.

Its subcellular location is the cytoplasm. The enzyme catalyses 2 D-alanine + ATP = D-alanyl-D-alanine + ADP + phosphate + H(+). It functions in the pathway cell wall biogenesis; peptidoglycan biosynthesis. In terms of biological role, cell wall formation. The protein is D-alanine--D-alanine ligase of Campylobacter jejuni subsp. doylei (strain ATCC BAA-1458 / RM4099 / 269.97).